Consider the following 197-residue polypeptide: Endo-1,4-beta-xylanase A (197 aa).

Residues Ser1 to Thr197 form the GH11 domain. Glu87 serves as the catalytic Nucleophile. Cys111 and Cys160 are oxidised to a cystine. Glu184 acts as the Proton donor in catalysis.

This sequence belongs to the glycosyl hydrolase 11 (cellulase G) family.

It is found in the secreted. The enzyme catalyses Endohydrolysis of (1-&gt;4)-beta-D-xylosidic linkages in xylans.. It functions in the pathway glycan degradation; xylan degradation. Functionally, hydrolyzes xylans into xylobiose and xylose. The protein is Endo-1,4-beta-xylanase A (XYNA) of Schizophyllum commune (Split gill fungus).